The following is a 343-amino-acid chain: Dihydroorotase (343 aa).

Zn(2+) contacts are provided by His14 and His16. Substrate contacts are provided by residues 16–18 (HLR) and Asn42. Residues Lys97, His136, His170, and Asp242 each coordinate Zn(2+). The residue at position 97 (Lys97) is an N6-carboxylysine. His136 lines the substrate pocket. Asp242 is an active-site residue. Substrate contacts are provided by His246 and Ala258.

This sequence belongs to the metallo-dependent hydrolases superfamily. DHOase family. Class II DHOase subfamily. In terms of assembly, homodimer. The cofactor is Zn(2+).

The catalysed reaction is (S)-dihydroorotate + H2O = N-carbamoyl-L-aspartate + H(+). It functions in the pathway pyrimidine metabolism; UMP biosynthesis via de novo pathway; (S)-dihydroorotate from bicarbonate: step 3/3. In terms of biological role, catalyzes the reversible cyclization of carbamoyl aspartate to dihydroorotate. In Helicobacter hepaticus (strain ATCC 51449 / 3B1), this protein is Dihydroorotase.